Consider the following 950-residue polypeptide: MVFSRRGGLGARDLLLWLLLLAAWEVGSGQLHYSIPEEAKHGTFVGRVAQDLGLELAELVPRLFRVASKTHRDLLEVNLQNGILFVNSRIDREELCQWSAECSIHLELIADRPLQVFHVEVKVKDINDNPPVFRGREQIIFIPESRLLNSRFPIEGAADADIGANALLTYTLSPSDYFSLDVEASDELSKSLWLELRKYLDREETPELHLLLTATDGGKPELQGTVELLITVLDVNDNAPLFDQAVYRVHLLETTANGTLVTTLNASDADEGVNGEVVFSFDSGISRDIQEKFKVDSSSGEIRLIDKLDYEETKSYEIQVKAVDKGSPPMSNHCKVLVKVLDVNDNAPELAVTSLYLPIREDAPLSTVIALITVSDRDSGANGQVTCSLMPHVPFKLVSTFKNYYSLVLDSALDRESLSVYELVVTARDGGSPSLWATARVSVEVADVNDNAPAFAQPEYTVFVKENNPPGCHIFTVSARDADAQENALVSYSLVERRVGERALSNYVSVHAESGKVYALQPLDHEELELLQFQVSARDAGVPPLGSNVTLQVFVLDENDNAPALLAPRVGGTIGAVSELVPRLVGAGHVVAKVRAVDADSGYNAWLSYELQPAAGGARIPFRVGLYTGEISTTRVLDEADLSRYRLLVLVKDHGEPALTATATVLVSLVESGQAPKASSRASVGVAGPEAALVDVNVYLIIAICAVSSLLVLTLLLYTALRCSVPPTEGAYVPGKPTLVCSSALGSWSNSQQRRQRVCSSEGPPKTDLMAFSPGLSPSLNTSERNEQPEANLDLSGNPRQPNPDWRYSASLRAGMHSSVHLEEAGILRAGPGGPDQQWPTVSSATPEPEAGEVSPPVGAGVNSNSWTFKYGPGNPKQSGPGELPDKFIIPGSPAIISIRQEPTNSQIDKSDFITFGKKEETKKKKKKKKGNKTQEKKEKGNSTTDNSDQ.

A signal peptide spans 1–29 (MVFSRRGGLGARDLLLWLLLLAAWEVGSG). Cadherin domains lie at 30–133 (QLHY…PPVF), 157–242 (AADA…APLF), 243–350 (DQAV…APEL), 351–455 (AVTS…APAF), 456–565 (AQPE…APAL), and 588–678 (GHVV…APKA). Residues 30–697 (QLHYSIPEEA…GPEAALVDVN (668 aa)) are Extracellular-facing. Residues Asn257 and Asn265 are each glycosylated (N-linked (GlcNAc...) asparagine). Asn548 carries N-linked (GlcNAc...) asparagine glycosylation. Residues 698–718 (VYLIIAICAVSSLLVLTLLLY) form a helical membrane-spanning segment. Residues 719-950 (TALRCSVPPT…GNSTTDNSDQ (232 aa)) are Cytoplasmic-facing. PXXP repeat units lie at residues 734–737 (PGKP), 799–802 (PRQP), 832–835 (PGGP), 873–876 (PGNP), and 891–894 (PGSP). A 5 X 4 AA repeats of P-X-X-P region spans residues 734–894 (PGKPTLVCSS…PDKFIIPGSP (161 aa)). 3 disordered regions span residues 752 to 808 (QQRR…DWRY), 828 to 856 (LRAGPGGPDQQWPTVSSATPEPEAGEVSP), and 871 to 890 (YGPGNPKQSGPGELPDKFII). Residues 900–950 (RQEPTNSQIDKSDFITFGKKEETKKKKKKKKGNKTQEKKEKGNSTTDNSDQ) form a disordered region. Over residues 909 to 923 (DKSDFITFGKKEETK) the composition is skewed to basic and acidic residues.

The protein resides in the cell membrane. Its subcellular location is the secreted. Potential calcium-dependent cell-adhesion protein. May be involved in the establishment and maintenance of specific neuronal connections in the brain. In Homo sapiens (Human), this protein is Protocadherin alpha-1 (PCDHA1).